A 148-amino-acid polypeptide reads, in one-letter code: NADH-quinone oxidoreductase subunit K 2 (148 aa).

3 consecutive transmembrane segments (helical) span residues 3-23 (LAYPAVLAALLFCVGLYGVLA), 28-48 (ILVLMSVELMLNAVNLNLVAF), and 64-84 (LFTIAIAAAEIGIGLAIVLAV). Residues 96 to 148 (LRDTAETDAAETLPDDAGTGPSGTDAAPNGDTTTATGRPGDNAGKNKKAEATR) are disordered.

This sequence belongs to the complex I subunit 4L family. As to quaternary structure, NDH-1 is composed of 14 different subunits. Subunits NuoA, H, J, K, L, M, N constitute the membrane sector of the complex.

It localises to the cell membrane. The enzyme catalyses a quinone + NADH + 5 H(+)(in) = a quinol + NAD(+) + 4 H(+)(out). In terms of biological role, NDH-1 shuttles electrons from NADH, via FMN and iron-sulfur (Fe-S) centers, to quinones in the respiratory chain. The immediate electron acceptor for the enzyme in this species is believed to be a menaquinone. Couples the redox reaction to proton translocation (for every two electrons transferred, four hydrogen ions are translocated across the cytoplasmic membrane), and thus conserves the redox energy in a proton gradient. This Streptomyces griseus subsp. griseus (strain JCM 4626 / CBS 651.72 / NBRC 13350 / KCC S-0626 / ISP 5235) protein is NADH-quinone oxidoreductase subunit K 2.